The primary structure comprises 2090 residues: Nuclear pore complex protein Nup205 (2090 aa).

The protein belongs to the NUP186/NUP192/NUP205 family. Part of the nuclear pore complex (NPC).

The protein resides in the nucleus. It localises to the nuclear pore complex. Its function is as follows. Plays a role in the nuclear pore complex (NPC) assembly and maintenance, but with limited role in NPC permeability. Required for specific nuclear import pathways such as Mad import. This Drosophila melanogaster (Fruit fly) protein is Nuclear pore complex protein Nup205.